A 296-amino-acid chain; its full sequence is Prostate androgen-regulated mucin-like protein 1 homolog (296 aa).

A signal peptide spans 1–20 (MVCKALITLCIFAAGLRVQG). Residues 21–244 (SPTPTLLPVS…EVENALSSGS (224 aa)) are Extracellular-facing. Residues Asn-62, Asn-96, and Asn-108 are each glycosylated (N-linked (GlcNAc...) asparagine). Residues 73-220 (LTSQLPTHPR…SPQDTEPGKV (148 aa)) are disordered. A compositionally biased stretch (basic and acidic residues) spans 80-96 (HPREEAVTSPPLKREVN). Residues 97–111 (STDSSPTGFSSNSSG) show a composition bias toward low complexity. The span at 125–145 (SPETSVPATGSQSPTLLFSQG) shows a compositional bias: polar residues. Low complexity-rich tracts occupy residues 146-175 (PTSASTSPATSPSEPLSASVTSNHSSTVNN) and 195-205 (SHTPTSHVTEP). Residue Asn-168 is glycosylated (N-linked (GlcNAc...) asparagine). The span at 206–217 (VPKEKSPQDTEP) shows a compositional bias: basic and acidic residues. The helical transmembrane segment at 245–265 (IAAITVTVIAVVLLVFGAAAY) threads the bilayer. Topologically, residues 266–296 (LKIRHSSYGRLLDDHDYGSWGNYNNPLYDDS) are cytoplasmic. Ser-284 carries the post-translational modification Phosphoserine.

The protein belongs to the PARM family. Highly N-glycosylated and O-glycosylated. In terms of tissue distribution, expressed in prostate. Detected in other organs at low levels, these include the heart and various tissues of the urogenital tract. Not detected in mammary gland.

It is found in the cell membrane. It localises to the golgi apparatus membrane. The protein localises to the endosome membrane. In terms of biological role, may regulate TLP1 expression and telomerase activity, thus enabling certain prostatic cells to resist apoptosis. In Rattus norvegicus (Rat), this protein is Prostate androgen-regulated mucin-like protein 1 homolog (Parm1).